We begin with the raw amino-acid sequence, 181 residues long: Large ribosomal subunit protein eL18 (181 aa).

The disordered stretch occupies residues 152–181; the sequence is WGKAPGQRGSHSAPYVRSEGRKFERAHGLK. The span at 169 to 181 shows a compositional bias: basic and acidic residues; that stretch reads SEGRKFERAHGLK.

Belongs to the eukaryotic ribosomal protein eL18 family.

The protein localises to the cytoplasm. This chain is Large ribosomal subunit protein eL18 (RPL18), found in Tetrahymena thermophila.